We begin with the raw amino-acid sequence, 264 residues long: Thymidylate synthase (264 aa).

R21 contacts dUMP. H51 contacts (6R)-5,10-methylene-5,6,7,8-tetrahydrofolate. 126–127 (RR) contributes to the dUMP binding site. Residue C146 is the Nucleophile of the active site. Residues 166 to 169 (RSAD), N177, and 207 to 209 (HIY) contribute to the dUMP site. D169 lines the (6R)-5,10-methylene-5,6,7,8-tetrahydrofolate pocket. A263 serves as a coordination point for (6R)-5,10-methylene-5,6,7,8-tetrahydrofolate.

The protein belongs to the thymidylate synthase family. Bacterial-type ThyA subfamily. In terms of assembly, homodimer.

The protein resides in the cytoplasm. The enzyme catalyses dUMP + (6R)-5,10-methylene-5,6,7,8-tetrahydrofolate = 7,8-dihydrofolate + dTMP. The protein operates within pyrimidine metabolism; dTTP biosynthesis. Its function is as follows. Catalyzes the reductive methylation of 2'-deoxyuridine-5'-monophosphate (dUMP) to 2'-deoxythymidine-5'-monophosphate (dTMP) while utilizing 5,10-methylenetetrahydrofolate (mTHF) as the methyl donor and reductant in the reaction, yielding dihydrofolate (DHF) as a by-product. This enzymatic reaction provides an intracellular de novo source of dTMP, an essential precursor for DNA biosynthesis. The polypeptide is Thymidylate synthase (Brucella abortus (strain 2308)).